A 142-amino-acid chain; its full sequence is SLSEKNKAAVKALWSKIGKSSDAIGNDALSRMIVVYPQTKTYFSHWPEVTPGSPHIKAHGKKVMGGIALAVTKIDDLKTGLSELSEQHAYKLRVDPANFKTLNHCILVVISTMFPKEFTPEAHVSLDKFLSGVALALADRYR.

Position 1 is an N-acetylserine (Ser-1). Residues 1–142 form the Globin domain; that stretch reads SLSEKNKAAV…VALALADRYR (142 aa). His-59 is an O2 binding site. His-88 contributes to the heme b binding site.

It belongs to the globin family. Heterotetramer of two alpha chains and two beta chains. Red blood cells.

Functionally, involved in oxygen transport from gills to the various peripheral tissues. In Pagothenia borchgrevinki (Bald rockcod), this protein is Hemoglobin subunit alpha (hba).